The sequence spans 241 residues: Ribonuclease PH (241 aa).

Phosphate contacts are provided by residues Arg89 and 127–129 (GTR).

This sequence belongs to the RNase PH family. Homohexameric ring arranged as a trimer of dimers.

It carries out the reaction tRNA(n+1) + phosphate = tRNA(n) + a ribonucleoside 5'-diphosphate. Functionally, phosphorolytic 3'-5' exoribonuclease that plays an important role in tRNA 3'-end maturation. Removes nucleotide residues following the 3'-CCA terminus of tRNAs; can also add nucleotides to the ends of RNA molecules by using nucleoside diphosphates as substrates, but this may not be physiologically important. Probably plays a role in initiation of 16S rRNA degradation (leading to ribosome degradation) during starvation. The polypeptide is Ribonuclease PH (Stenotrophomonas maltophilia (strain K279a)).